The following is a 399-amino-acid chain: Glycosyltransferase BC10 (399 aa).

The Cytoplasmic segment spans residues 1-17; sequence MKPPRRWMYGRGGGKGK. The helical; Signal-anchor for type II membrane protein transmembrane segment at 18-38 threads the bilayer; it reads PAGLLLLGVFLCLSVVLLLLL. The Lumenal segment spans residues 39–399; sequence HGSSPSLEGE…LIAANGASTM (361 aa). N142 and N188 each carry an N-linked (GlcNAc...) asparagine glycan.

This sequence belongs to the glycosyltransferase 14 family. In terms of tissue distribution, expressed in roots, culms, leaves and panicles. Expressed in vascular bundles of leaf sheaths and stems where sclerenchyma cells are developing. Expressed in mechanical tissues of young organs, such as young leaf sheaths, stems and tiller buds.

The protein localises to the membrane. Functionally, glycosyltransferase required for the regulation of cellulose biosynthesis in the cell wall. Required for the biosynthesis of hexoses (glucose, mannose and galactose) in both cellulosic and non-cellulosic (pectins and hemicelluloses) components of cell walls. Required for the formation of arabinogalactan proteins which contribute to the strengthening of cell walls. Possesses low glycosyltransferase activity. The protein is Glycosyltransferase BC10 of Oryza sativa subsp. japonica (Rice).